We begin with the raw amino-acid sequence, 373 residues long: MKYTKCNFMMSVLGIIIYVTDLVADIVLSVRYFHDGQYVLGVLTLSFVLCGTLIVHCFSYSWLKADLEKAGQENERYFLLLHCLQGGVFTRYWFALRTGYHVVFKHSDRKSNFMEEQTDPHKEAIDMATDLSMLRLFETYLEGCPQLILQLYAFLECGQANLSQCMVIMVSCCAISWSTVDYQIALRKSLPDKNLLRGLWPKLMYLFYKLLTLLSWMLSVVLLLFVDVRVALLLLLFLWITGFIWAFINHTQFCNSVSMEFLYRIVVGFILVFTFFNIKGQNTKCPMSCYYTVRVLGTLGILTVFWIYPLSIFNSDYFIPISATIVLALLLGIIFLGVYYGNFHPNRNVEPQLDETDGKAPQRDCRIRYFLMD.

Helical transmembrane passes span F8 to L28, Y38 to F58, M166 to L186, L206 to V226, V230 to H250, S256 to F276, V295 to S315, and F318 to V338.

Belongs to the XK family. In terms of processing, undergoes proteolytic processing by caspase-3 (CASP3), caspase-6 (CASP6) and caspase-7 (CASP7) to generate the XK-related protein 9, processed form, leading to its activation. Highly expressed in the small intestines; weakly expressed in the pancreas, liver, stomach, and large intestines.

The protein localises to the cell membrane. The catalysed reaction is a 1,2-diacyl-sn-glycero-3-phospho-L-serine(in) = a 1,2-diacyl-sn-glycero-3-phospho-L-serine(out). Activated upon caspase cleavage to generate the XK-related protein 9, processed form. Does not act prior the onset of apoptosis. In terms of biological role, phospholipid scramblase that promotes phosphatidylserine exposure on apoptotic cell surface. Phosphatidylserine is a specific marker only present at the surface of apoptotic cells and acts as a specific signal for engulfment. This Mus musculus (Mouse) protein is XK-related protein 9.